Reading from the N-terminus, the 216-residue chain is Vascular endothelial growth factor A (216 aa).

Residues 1-26 (MNFLLTWIHWGLAALLYLQSAELSKA) form the signal peptide. Disulfide bonds link cysteine 52-cysteine 94, cysteine 83-cysteine 128, and cysteine 87-cysteine 130. N-linked (GlcNAc...) asparagine glycosylation occurs at asparagine 101. Residues 132–141 (PKKDVKNKQE) are compositionally biased toward basic and acidic residues. Residues 132–167 (PKKDVKNKQEKKSKRGKGKGQKRKRKKGRYKPPSFH) are disordered. Over residues 142–161 (KKSKRGKGKGQKRKRKKGRY) the composition is skewed to basic residues.

This sequence belongs to the PDGF/VEGF growth factor family. As to quaternary structure, homodimer; disulfide-linked. Also found as heterodimer with PGF.

Growth factor active in angiogenesis, vasculogenesis and endothelial cell growth. Induces endothelial cell proliferation, promotes cell migration, inhibits apoptosis and induces permeabilization of blood vessels. Binds to the FLT1/VEGFR1 and KDR/VEGFR2 receptors, heparan sulfate and heparin. The chain is Vascular endothelial growth factor A (VEGFA) from Gallus gallus (Chicken).